The chain runs to 145 residues: Brain and acute leukemia cytoplasmic protein (145 aa).

The N-myristoyl glycine moiety is linked to residue Gly2. Cys3 carries S-palmitoyl cysteine lipidation. The tract at residues 3–35 (CGGSRADAIEPRYYESWTRETESTWLTYTDSDA) is interaction with CAMK2A. 2 disordered regions span residues 36–56 (LPSA…AGVL) and 87–109 (CPNS…WATE). The segment covering 87 to 105 (CPNSQNLSSGPLTQKQNGL) has biased composition (polar residues).

As to quaternary structure, interacts with CAMK2A. Palmitoylation and myristoylation target the protein to the lipid rafts. As to expression, at the mRNA level, predominantly expressed in the brain. At the protein level, mainly expressed in muscle tissues. In skeletal muscles, expressed in cranial and facial muscles, muscles of the neck, back, thoracic wall, and thigh. Also found in the contractile myoepithelial cell layer of salivary glands. In smooth muscles, expressed in the gastric wall, uterus, urinary bladder, as well as in the muscular lining around seminiferous tubules, prostatic ducts, epididymis, vas deferens, walls of small blood vessels in the dermis, and fascial layers between muscle fibers, brain, and around the spinal cord. Strongly expressed in myocardium. High expression levels are observed in placental spongiotrophoblast and adjacent myometrium. Also expressed in bone marrow hematopoietic cells. In the mature thymus, expressed in rare scattered cells. Weakly expressed in the brain neuropil, particularly near the hippocampus, and spinal cord white matter. Not detected in skin keratinocytes or lung (at protein level).

The protein resides in the cytoplasm. The protein localises to the synapse. It is found in the synaptosome. Its subcellular location is the membrane raft. It localises to the postsynaptic density. Functionally, may play a synaptic role at the postsynaptic lipid rafts possibly through interaction with CAMK2A. This is Brain and acute leukemia cytoplasmic protein (Baalc) from Mus musculus (Mouse).